The primary structure comprises 270 residues: Protein MGF 110-1L (270 aa).

The first 26 residues, 1–26 (MLGLQIFTLLSIPTLLYTYEIEPLER), serve as a signal peptide directing secretion. The Extracellular portion of the chain corresponds to 27 to 117 (TSTPPEKELG…HERHEADIRK (91 aa)). One copy of the A repeat lies at 27–146 (TSTPPEKELG…YIRKRSLQTV (120 aa)). N75 carries N-linked (GlcNAc...) asparagine; by host glycosylation. A helical membrane pass occupies residues 118–138 (WQKLLTYGFYLAGCILAVNYI). Topologically, residues 139–145 (RKRSLQT) are cytoplasmic. Residues 146-166 (VMYLLVFLVISFLLSQLMLYG) form a helical membrane-spanning segment. The stretch at 147 to 270 (MYLLVFLVIS…DNLMKKQDIM (124 aa)) is one B repeat. Over 167 to 270 (ELEDKKHKIG…DNLMKKQDIM (104 aa)) the chain is Extracellular.

The protein belongs to the asfivirus MGF 110 family.

The protein resides in the membrane. Plays a role in virus cell tropism, and may be required for efficient virus replication in macrophages. The polypeptide is Protein MGF 110-1L (Ornithodoros (relapsing fever ticks)).